The chain runs to 557 residues: Copine-7 (557 aa).

C2 domains are found at residues 1-128 (MSGD…TRPL) and 135-263 (NAGK…AQWD). Ca(2+) contacts are provided by Asp168, Asp174, Asp230, Asp232, and Asp238. Residues 306 to 505 (HCTVAIDFTA…PALRDIVQFV (200 aa)) form the VWFA domain.

This sequence belongs to the copine family. The cofactor is Ca(2+).

The protein resides in the cytoplasm. The protein localises to the nucleus. It localises to the cell membrane. Calcium-dependent phospholipid-binding protein that may play a role in calcium-mediated intracellular processes. The polypeptide is Copine-7 (Mus musculus (Mouse)).